A 217-amino-acid polypeptide reads, in one-letter code: Small ribosomal subunit protein uS3 (217 aa).

Residues 38 to 106 (VRKYIETALK…RVHINIIEIK (69 aa)) enclose the KH type-2 domain.

It belongs to the universal ribosomal protein uS3 family. Part of the 30S ribosomal subunit. Forms a tight complex with proteins S10 and S14.

Binds the lower part of the 30S subunit head. Binds mRNA in the 70S ribosome, positioning it for translation. The chain is Small ribosomal subunit protein uS3 from Lysinibacillus sphaericus (strain C3-41).